We begin with the raw amino-acid sequence, 1333 residues long: Xanthine dehydrogenase/oxidase (1333 aa).

The 2Fe-2S ferredoxin-type domain maps to 4-91 (DKLVFFVNGR…HVAVTTVEGI (88 aa)). Cys-43, Cys-48, Cys-51, Cys-73, Cys-113, Cys-116, Cys-148, and Cys-150 together coordinate [2Fe-2S] cluster. The region spanning 229–414 (FEGERVTWIQ…LSIEIPYSRE (186 aa)) is the FAD-binding PCMH-type domain. FAD is bound by residues 257-264 (LVVGNTEI), Phe-337, 347-351 (SVGGN), Asp-360, Leu-404, and Lys-422. Intrachain disulfides connect Cys-509–Cys-1318 and Cys-536–Cys-993. Gln-768 and Phe-799 together coordinate Mo-molybdopterin. Positions 803 and 881 each coordinate substrate. Arg-913 serves as a coordination point for Mo-molybdopterin. 2 residues coordinate substrate: Phe-915 and Thr-1011. Position 1080 (Ala-1080) interacts with Mo-molybdopterin. The active-site Proton acceptor is Glu-1262.

This sequence belongs to the xanthine dehydrogenase family. Homodimer. Interacts with BTN1A1. Requires [2Fe-2S] cluster as cofactor. It depends on FAD as a cofactor. Mo-molybdopterin is required as a cofactor. Post-translationally, subject to partial proteolysis; this alters the enzyme from the dehydrogenase form (D) to the oxidase form (O). In terms of processing, contains sulfhydryl groups that are easily oxidized (in vitro); this alters the enzyme from the dehydrogenase form (D) to the oxidase form (O). Detected in milk (at protein level).

The protein localises to the cytoplasm. Its subcellular location is the peroxisome. The protein resides in the secreted. The enzyme catalyses xanthine + NAD(+) + H2O = urate + NADH + H(+). It catalyses the reaction hypoxanthine + NAD(+) + H2O = xanthine + NADH + H(+). The catalysed reaction is xanthine + O2 + H2O = urate + H2O2. Can be converted from the dehydrogenase form (D) to the oxidase form (O) irreversibly by proteolysis or reversibly through the oxidation of sulfhydryl groups. In terms of biological role, key enzyme in purine degradation. Catalyzes the oxidation of hypoxanthine to xanthine. Catalyzes the oxidation of xanthine to uric acid. Contributes to the generation of reactive oxygen species. Has also low oxidase activity towards aldehydes (in vitro). This Homo sapiens (Human) protein is Xanthine dehydrogenase/oxidase (XDH).